The chain runs to 207 residues: Nudix hydrolase 4 (207 aa).

The Nudix hydrolase domain maps to 58-194; sequence GYRQVVGCVP…WMREALEAFI (137 aa). The Nudix box signature appears at 101–122; sequence GGWETDESMEEAALRETIEEAG. Positions 116 and 120 each coordinate Mg(2+).

This sequence belongs to the Nudix hydrolase family. Mg(2+) is required as a cofactor. It depends on Mn(2+) as a cofactor. In terms of tissue distribution, expressed in roots, stems and leaves.

It carries out the reaction ADP-D-ribose + H2O = D-ribose 5-phosphate + AMP + 2 H(+). It catalyses the reaction NAD(+) + H2O = beta-nicotinamide D-ribonucleotide + AMP + 2 H(+). The catalysed reaction is NADH + H2O = reduced beta-nicotinamide D-ribonucleotide + AMP + 2 H(+). Probably mediates the hydrolysis of some nucleoside diphosphate derivatives. In vitro, it can use both NADH and ADP-ribose as substrates; however the relevance of such substrates in vivo is unclear. The sequence is that of Nudix hydrolase 4 (NUDT4) from Arabidopsis thaliana (Mouse-ear cress).